The sequence spans 132 residues: Keratin, high-sulfur matrix protein, IIIA3 (132 aa).

Its function is as follows. The keratin products of mammalian epidermal derivatives such as wool and hair consist of microfibrils embedded in a rigid matrix of other proteins. The matrix proteins include the high-sulfur and high-tyrosine keratins, having molecular weights of 6-20 kDa, whereas the microfibrils contain the larger, low-sulfur keratins (40-56 kDa). In Capra hircus (Goat), this protein is Keratin, high-sulfur matrix protein, IIIA3.